Reading from the N-terminus, the 61-residue chain is Large ribosomal subunit protein eL24 (61 aa).

Zn(2+) contacts are provided by Cys7, Cys10, Cys33, and Cys37. The segment at 7-37 (CSFCGHEIPPGTGLMYVRNDGTILWFCSSKC) adopts a C4-type zinc-finger fold.

It belongs to the eukaryotic ribosomal protein eL24 family. Part of the 50S ribosomal subunit. Forms a cluster with proteins L3 and L14. The cofactor is Zn(2+).

Its function is as follows. Binds to the 23S rRNA. This is Large ribosomal subunit protein eL24 from Saccharolobus islandicus (strain Y.N.15.51 / Yellowstone #2) (Sulfolobus islandicus).